Consider the following 348-residue polypeptide: MSVKLQICDSTLRDGNHAVAHQLGRADISAYARAAEEAGVDVLEVGHGNGLGASSIQVGIAAVSDAEMLRAAKAELRNSRLGVLSIPGFASVERDLKPALDCGVDEVRVGAHCTEADVTRQQITMLRSMGVRVKGLLLMSHMASAGKLVEQAGLMQEYGAEAVVLMDSAGAYTPEMVREKVGELVEKLDIAIGFHAHNNLGLSVINSITAVRAGASIVDVTARGFGAGAGNAPIELVAANLHVEQIEARIKLFDALDAADTAEERFVKHVPTNDGVTIASGIAGVFSGFAAPVRRASRRFGVDPREILLELGRRRVVAGQEDTIIEVAMALAAEAASADLTHAFVDHI.

One can recognise a Pyruvate carboxyltransferase domain in the interval 5-256; sequence LQICDSTLRD…EARIKLFDAL (252 aa). 13 to 14 provides a ligand contact to substrate; that stretch reads RD. Asp-14 contacts Mn(2+). His-17 (proton acceptor) is an active-site residue. Substrate-binding residues include Ser-168 and His-195. Residues His-195 and His-197 each contribute to the Mn(2+) site.

Belongs to the 4-hydroxy-2-oxovalerate aldolase family.

The catalysed reaction is (S)-4-hydroxy-2-oxopentanoate = acetaldehyde + pyruvate. This Salinispora arenicola (strain CNS-205) protein is 4-hydroxy-2-oxovalerate aldolase 2.